Reading from the N-terminus, the 467-residue chain is Syntaxin-5 (467 aa).

Disordered stretches follow at residues 1 to 53 (MQTR…QSLV) and 58 to 77 (GHEA…SIST). At 1–445 (MQTRRRLHQT…KYFQSVSKNR (445 aa)) the chain is on the cytoplasmic side. The span at 10–22 (TDQQDYSSSSTYT) shows a compositional bias: low complexity. The segment covering 29-45 (GGAGAGSVGTGTAGGSV) has biased composition (gly residues). Residues 68–77 (NYQSGDSIST) show a composition bias toward polar residues. Residues 245–269 (IKGDLNALNQQIARLQDISKDQRRH) adopt a coiled-coil conformation. The disordered stretch occupies residues 310–335 (QQKTRRDQFSQGPGPLAAHTVSPSTA). The t-SNARE coiled-coil homology domain occupies 375–437 (DNYVQQRAET…EAAHGEILKY (63 aa)). A helical; Anchor for type IV membrane protein transmembrane segment spans residues 446–466 (WLMIKIFGVLIFFFLFFVVFM). Position 467 (Ser467) is a topological domain, vesicular.

Belongs to the syntaxin family. As to quaternary structure, homodimer.

It localises to the golgi apparatus. Its subcellular location is the cis-Golgi network membrane. Mediates endoplasmic reticulum to Golgi transport. The sequence is that of Syntaxin-5 from Drosophila melanogaster (Fruit fly).